Here is a 204-residue protein sequence, read N- to C-terminus: Probable proteasome subunit beta type-3 (204 aa).

This sequence belongs to the peptidase T1B family. In terms of assembly, the 26S proteasome consists of a 20S proteasome core and two 19S regulatory subunits. The 20S proteasome core is composed of 28 subunits that are arranged in four stacked rings, resulting in a barrel-shaped structure. The two end rings are each formed by seven alpha subunits, and the two central rings are each formed by seven beta subunits. The catalytic chamber with the active sites is on the inside of the barrel.

The protein resides in the cytoplasm. It is found in the nucleus. Its function is as follows. Non-catalytic component of the proteasome, a multicatalytic proteinase complex which is characterized by its ability to cleave peptides with Arg, Phe, Tyr, Leu, and Glu adjacent to the leaving group at neutral or slightly basic pH. The proteasome has an ATP-dependent proteolytic activity. The protein is Probable proteasome subunit beta type-3 (pup3) of Schizosaccharomyces pombe (strain 972 / ATCC 24843) (Fission yeast).